The sequence spans 411 residues: MTQGPIQVNSEIGRLKTVLLKRPGKELENLVPDHLSGLLFDDIPYLKVAQEEHDKFAQTLRDEGVEVVYLEKLAAEAIADKDVREQFIDDILAESQKTVLGHEAEIKTFFAKLSDQELIDKIMAGVRKEEIELKTTHLVEYMDDRYPFYLDPMPNLYFTRDPQASVGRGMTINRMYWRARRRESLFMTYILKYHPRFKDADVPVWLDRNSPFNIEGGDELILSKEALAIGISERTSAQAIERLARNIFKDESTTFKKVIAIEIPNSRTFMHLDTVFTMIDYDKFTVHSAIFKEENNMNLFTIEYDEAKDDIKITHSNKLRETLADVLGVEKIEFIPTGNGDVIDGAREQWNDGSNTLCIRPGVVVTYDRNYVSNQLLRDKGIKVLEITGSELVRGRGGPRCMSQPLFREDI.

The active-site Amidino-cysteine intermediate is cysteine 401.

It belongs to the arginine deiminase family.

The protein resides in the cytoplasm. The enzyme catalyses L-arginine + H2O = L-citrulline + NH4(+). Its pathway is amino-acid degradation; L-arginine degradation via ADI pathway; carbamoyl phosphate from L-arginine: step 1/2. This chain is Arginine deiminase, found in Staphylococcus haemolyticus (strain JCSC1435).